Consider the following 219-residue polypeptide: Holliday junction branch migration complex subunit RuvA (219 aa).

The domain I stretch occupies residues 1-71 (MISWIKGELV…EDSDMLFGFS (71 aa)). The domain II stretch occupies residues 72–150 (TKDQRDFFIQ…NKEIEKENLN (79 aa)). Residues 151 to 161 (INNFLEKNKDL) form a flexible linker region. The interval 161-219 (LDSIFKDIDLTLQSLNYSKKEIKNLFPKLINNIKNSSLEKESISFENLLKEAMNYLDHK) is domain III.

The protein belongs to the RuvA family. In terms of assembly, homotetramer. Forms an RuvA(8)-RuvB(12)-Holliday junction (HJ) complex. HJ DNA is sandwiched between 2 RuvA tetramers; dsDNA enters through RuvA and exits via RuvB. An RuvB hexamer assembles on each DNA strand where it exits the tetramer. Each RuvB hexamer is contacted by two RuvA subunits (via domain III) on 2 adjacent RuvB subunits; this complex drives branch migration. In the full resolvosome a probable DNA-RuvA(4)-RuvB(12)-RuvC(2) complex forms which resolves the HJ.

It localises to the cytoplasm. Its function is as follows. The RuvA-RuvB-RuvC complex processes Holliday junction (HJ) DNA during genetic recombination and DNA repair, while the RuvA-RuvB complex plays an important role in the rescue of blocked DNA replication forks via replication fork reversal (RFR). RuvA specifically binds to HJ cruciform DNA, conferring on it an open structure. The RuvB hexamer acts as an ATP-dependent pump, pulling dsDNA into and through the RuvAB complex. HJ branch migration allows RuvC to scan DNA until it finds its consensus sequence, where it cleaves and resolves the cruciform DNA. The polypeptide is Holliday junction branch migration complex subunit RuvA (Prochlorococcus marinus subsp. pastoris (strain CCMP1986 / NIES-2087 / MED4)).